Reading from the N-terminus, the 415-residue chain is Tyrosine--tRNA ligase (415 aa).

Y34 contacts L-tyrosine. Residues 39-48 (PTADSLHLGH) carry the 'HIGH' region motif. Residues Y164 and Q168 each contribute to the L-tyrosine site. Residues 226 to 230 (KFGKS) carry the 'KMSKS' region motif. K229 provides a ligand contact to ATP. Residues 348–415 (KNVVDFLVDG…KKKYFLGKVK (68 aa)) form the S4 RNA-binding domain.

Belongs to the class-I aminoacyl-tRNA synthetase family. TyrS type 1 subfamily. Homodimer.

It is found in the cytoplasm. The catalysed reaction is tRNA(Tyr) + L-tyrosine + ATP = L-tyrosyl-tRNA(Tyr) + AMP + diphosphate + H(+). Catalyzes the attachment of tyrosine to tRNA(Tyr) in a two-step reaction: tyrosine is first activated by ATP to form Tyr-AMP and then transferred to the acceptor end of tRNA(Tyr). In Leuconostoc mesenteroides subsp. mesenteroides (strain ATCC 8293 / DSM 20343 / BCRC 11652 / CCM 1803 / JCM 6124 / NCDO 523 / NBRC 100496 / NCIMB 8023 / NCTC 12954 / NRRL B-1118 / 37Y), this protein is Tyrosine--tRNA ligase.